Reading from the N-terminus, the 514-residue chain is F-box-like/WD repeat-containing protein TBL1XR1 (514 aa).

Ser2 carries the post-translational modification N-acetylserine. In terms of domain architecture, LisH spans 4–36 (SSDEVNFLVYRYLQESGFSHSAFTFGIESHISQ). The 46-residue stretch at 41–86 (GALVPPAALISIIQKGLQYVEAEVSINEDGTLFDGRPIESLSLIDA) folds into the F-box-like domain. At Lys102 the chain carries N6-acetyllysine. Ser119 carries the post-translational modification Phosphoserine. Low complexity predominate over residues 120 to 135 (QQGSAKNGENTANGEE). Positions 120–139 (QQGSAKNGENTANGEENGAH) are disordered. 8 WD repeats span residues 167 to 206 (GHES…TSGS), 223 to 262 (PSNK…ASTL), 264 to 303 (QHKG…AKQQ), 306 to 344 (FHSA…PIKT), 347 to 386 (GHTN…CVHD), 389 to 437 (AHNK…CIHT), 440 to 479 (KHQE…LVHS), and 481 to 513 (RGTG…LDLR). Lys277 is covalently cross-linked (Glycyl lysine isopeptide (Lys-Gly) (interchain with G-Cter in SUMO2)).

It belongs to the WD repeat EBI family. As to quaternary structure, component of the N-Cor repressor complex, at least composed of NCOR1, NCOR2, HDAC3, TBL1X, TBL1XR1, CORO2A and GPS2. Probable component of some E3 ubiquitin ligase complex. Interacts with histones H2B and H4. Interacts with MECP2; bridges interaction between MECP2 and NCOR1. Interacts with USP44. Widely expressed including the pituitary, hypothalamus, white and brown adipose tissue, muscle and liver.

Its subcellular location is the nucleus. Its function is as follows. F-box-like protein involved in the recruitment of the ubiquitin/19S proteasome complex to nuclear receptor-regulated transcription units. Plays an essential role in transcription activation mediated by nuclear receptors. Probably acts as integral component of the N-Cor corepressor complex that mediates the recruitment of the 19S proteasome complex, leading to the subsequent proteasomal degradation of N-Cor complex, thereby allowing cofactor exchange, and transcription activation. This is F-box-like/WD repeat-containing protein TBL1XR1 (TBL1XR1) from Homo sapiens (Human).